A 245-amino-acid polypeptide reads, in one-letter code: tRNA (guanine-N(1)-)-methyltransferase (245 aa).

S-adenosyl-L-methionine contacts are provided by residues G113 and 133–138 (IGDYVL).

It belongs to the RNA methyltransferase TrmD family. Homodimer.

The protein resides in the cytoplasm. The catalysed reaction is guanosine(37) in tRNA + S-adenosyl-L-methionine = N(1)-methylguanosine(37) in tRNA + S-adenosyl-L-homocysteine + H(+). Functionally, specifically methylates guanosine-37 in various tRNAs. This chain is tRNA (guanine-N(1)-)-methyltransferase, found in Anoxybacillus flavithermus (strain DSM 21510 / WK1).